The following is a 214-amino-acid chain: Redox-sensing transcriptional repressor Rex (214 aa).

The H-T-H motif DNA-binding region spans 17–56 (LYYRIFKRFHADQVEKASSKQIADAMGIDSATVRRDFSYF). Position 91–96 (91–96 (GCGNIG)) interacts with NAD(+).

The protein belongs to the transcriptional regulatory Rex family. Homodimer.

It localises to the cytoplasm. Functionally, modulates transcription in response to changes in cellular NADH/NAD(+) redox state. The polypeptide is Redox-sensing transcriptional repressor Rex (Streptococcus pyogenes serotype M1).